The following is a 140-amino-acid chain: Desampylase (140 aa).

The 121-residue stretch at 13–133 (TLIIPQHYLR…WILSEKNKIS (121 aa)) folds into the MPN domain. Residue Glu-34 is the Proton donor/acceptor of the active site. Residues His-88, His-90, and Asp-101 each contribute to the Zn(2+) site. The JAMM motif signature appears at 88–101 (HSHIACPPIPSGKD).

This sequence belongs to the peptidase M67B family. In terms of assembly, exists in two major states: monomer and homodimer. Both conformational states are catalytically active. Requires Zn(2+) as cofactor. The disulfide bridge probably stabilizes the PfJAMM1 homodimer at the optimal growth temperature of the hyperthermophile.

The enzyme catalyses an N(6)-[small archaeal modifier protein]-[protein]-L-lysine + H2O = a [protein]-L-lysine + a [small archaeal modifier protein].. Its activity is regulated as follows. Inhibited by EDTA in vitro. Functionally, metalloprotease that displays desampylase (DSAMP) activity, cleaving ubiquitin-like small archaeal modifier proteins (SAMP1, SAMP2 and SAMP3) from protein conjugates (isopeptide- and linear-linked). Thus, likely regulates sampylation and the pools of 'free' SAMP available for protein modification. In vitro, is also able to cleave non-physiological ubiquitin (Ub) substrates, such as 'Met1-', 'Lys48-', and 'Lys63'-linked Ub dimers (Ub2), and to remove Ub tags from diverse proteins. This chain is Desampylase, found in Pyrococcus furiosus (strain ATCC 43587 / DSM 3638 / JCM 8422 / Vc1).